The following is a 160-amino-acid chain: Cytochrome b6-f complex subunit 4 (160 aa).

3 consecutive transmembrane segments (helical) span residues 36–56 (LLYI…GLAV), 95–115 (LLGI…PFIE), and 131–151 (SLFL…CLPI).

This sequence belongs to the cytochrome b family. PetD subfamily. In terms of assembly, the 4 large subunits of the cytochrome b6-f complex are cytochrome b6, subunit IV (17 kDa polypeptide, PetD), cytochrome f and the Rieske protein, while the 4 small subunits are PetG, PetL, PetM and PetN. The complex functions as a dimer.

The protein resides in the cellular thylakoid membrane. In terms of biological role, component of the cytochrome b6-f complex, which mediates electron transfer between photosystem II (PSII) and photosystem I (PSI), cyclic electron flow around PSI, and state transitions. This Prochlorococcus marinus (strain NATL2A) protein is Cytochrome b6-f complex subunit 4.